A 98-amino-acid chain; its full sequence is Dehydrin HIRD11 (98 aa).

The segment at 1–98 (MAGLINKIGD…HSSSSDSDSD (98 aa)) is disordered. Residues 19–72 (KEGEHKKEEEHKKHVDEHKSGEHKEGIVDKIKDKIHGGEGKSHDGEGKSHDGEK) show a composition bias toward basic and acidic residues. Residues 73 to 82 (KKKKDKKEKK) show a composition bias toward basic residues.

This sequence belongs to the KS-type dehydrin family. In terms of assembly, interacts with PXL1. Phosphorylated in vivo. Phosphorylated in vitro by PXL1. In terms of tissue distribution, highly expressed in the cambial zone of the stem vasculature (at protein level). Expressed in roots, rosettes leaves, stems, cauline leaves, flowers and siliques.

It is found in the cytoplasm. It localises to the nucleus. Intrinsically disordered and metal-binding protein. Binds to the divalent cations cobalt, nickel, copper and zinc, but not to magnesium, calcium, manganese or cadmium. Binding to metal ions decreases disordered state, decreases susceptibility to trypsin and promotes self-association. Can reduce the formation of reactive oxygen species (ROS) in a copper-ascorbate in vitro system. The protein is Dehydrin HIRD11 of Arabidopsis thaliana (Mouse-ear cress).